We begin with the raw amino-acid sequence, 79 residues long: Acyl carrier protein (79 aa).

The Carrier domain occupies 2–77 (ADHASKIKDI…DAVAYLEAKV (76 aa)). Residue serine 37 is modified to O-(pantetheine 4'-phosphoryl)serine.

Belongs to the acyl carrier protein (ACP) family. Post-translationally, 4'-phosphopantetheine is transferred from CoA to a specific serine of apo-ACP by AcpS. This modification is essential for activity because fatty acids are bound in thioester linkage to the sulfhydryl of the prosthetic group.

It localises to the cytoplasm. It participates in lipid metabolism; fatty acid biosynthesis. Functionally, carrier of the growing fatty acid chain in fatty acid biosynthesis. This is Acyl carrier protein from Gemmatimonas aurantiaca (strain DSM 14586 / JCM 11422 / NBRC 100505 / T-27).